Reading from the N-terminus, the 676-residue chain is Methionine--tRNA ligase (676 aa).

The 'HIGH' region motif lies at 11–21; it reads PYANGPCHLGH. Cysteine 143, cysteine 146, cysteine 156, and cysteine 159 together coordinate Zn(2+). The 'KMSKS' region motif lies at 326–330; sequence KMSTS. ATP is bound at residue threonine 329. The tRNA-binding domain maps to 581–676; that stretch reads EFGKVKLVVG…TEGNVGEYIK (96 aa).

This sequence belongs to the class-I aminoacyl-tRNA synthetase family. MetG type 1 subfamily. Homodimer. Zn(2+) is required as a cofactor.

The protein resides in the cytoplasm. It catalyses the reaction tRNA(Met) + L-methionine + ATP = L-methionyl-tRNA(Met) + AMP + diphosphate. In terms of biological role, is required not only for elongation of protein synthesis but also for the initiation of all mRNA translation through initiator tRNA(fMet) aminoacylation. This is Methionine--tRNA ligase from Methanosphaera stadtmanae (strain ATCC 43021 / DSM 3091 / JCM 11832 / MCB-3).